The following is a 40-amino-acid chain: Photosystem II reaction center protein J (40 aa).

A helical membrane pass occupies residues 8-28 (IPLWLIGTVAGIPVIGSVGVF).

Belongs to the PsbJ family. PSII is composed of 1 copy each of membrane proteins PsbA, PsbB, PsbC, PsbD, PsbE, PsbF, PsbH, PsbI, PsbJ, PsbK, PsbL, PsbM, PsbT, PsbX, PsbY, PsbZ, Psb30/Ycf12, at least 3 peripheral proteins of the oxygen-evolving complex and a large number of cofactors. It forms dimeric complexes.

The protein resides in the plastid. Its subcellular location is the chloroplast thylakoid membrane. In terms of biological role, one of the components of the core complex of photosystem II (PSII). PSII is a light-driven water:plastoquinone oxidoreductase that uses light energy to abstract electrons from H(2)O, generating O(2) and a proton gradient subsequently used for ATP formation. It consists of a core antenna complex that captures photons, and an electron transfer chain that converts photonic excitation into a charge separation. The protein is Photosystem II reaction center protein J of Acorus calamus (Sweet flag).